Reading from the N-terminus, the 212-residue chain is uncharacterized protein (212 aa).

The interval 1–88 is disordered; that stretch reads MAEEQKIALE…PAPAKPASAS (88 aa). Ser-13 is modified (phosphoserine). The segment covering 23-41 has biased composition (pro residues); that stretch reads ADTPAPAPAEIPAPAPAPT. Basic and acidic residues predominate over residues 45-54; the sequence is VTKDVAEEKI.

This sequence belongs to the remorin family.

The protein resides in the cell membrane. This is an uncharacterized protein from Arabidopsis thaliana (Mouse-ear cress).